The following is a 680-amino-acid chain: tRNA 5-methylaminomethyl-2-thiouridine biosynthesis bifunctional protein MnmC (680 aa).

A tRNA (mnm(5)s(2)U34)-methyltransferase region spans residues 1 to 267 (MTAEPNKPCQ…MAAILSSDAP (267 aa)). Residues 273 to 680 (IGGGLASAHL…LRKLLKGKSL (408 aa)) form an FAD-dependent cmnm(5)s(2)U34 oxidoreductase region.

The protein in the N-terminal section; belongs to the methyltransferase superfamily. tRNA (mnm(5)s(2)U34)-methyltransferase family. It in the C-terminal section; belongs to the DAO family. Requires FAD as cofactor.

Its subcellular location is the cytoplasm. The catalysed reaction is 5-aminomethyl-2-thiouridine(34) in tRNA + S-adenosyl-L-methionine = 5-methylaminomethyl-2-thiouridine(34) in tRNA + S-adenosyl-L-homocysteine + H(+). Functionally, catalyzes the last two steps in the biosynthesis of 5-methylaminomethyl-2-thiouridine (mnm(5)s(2)U) at the wobble position (U34) in tRNA. Catalyzes the FAD-dependent demodification of cmnm(5)s(2)U34 to nm(5)s(2)U34, followed by the transfer of a methyl group from S-adenosyl-L-methionine to nm(5)s(2)U34, to form mnm(5)s(2)U34. The protein is tRNA 5-methylaminomethyl-2-thiouridine biosynthesis bifunctional protein MnmC of Shewanella sp. (strain W3-18-1).